A 367-amino-acid chain; its full sequence is Queuine tRNA-ribosyltransferase (367 aa).

Asp-92 (proton acceptor) is an active-site residue. Residues 92–96 (DSGGF), Asp-146, Gln-188, and Gly-215 each bind substrate. The segment at 246 to 252 (GVGTPKD) is RNA binding. Asp-265 acts as the Nucleophile in catalysis. Zn(2+) contacts are provided by Cys-303, Cys-305, Cys-308, and His-334.

Belongs to the queuine tRNA-ribosyltransferase family. In terms of assembly, homodimer. Within each dimer, one monomer is responsible for RNA recognition and catalysis, while the other monomer binds to the replacement base PreQ1. Requires Zn(2+) as cofactor.

The enzyme catalyses 7-aminomethyl-7-carbaguanine + guanosine(34) in tRNA = 7-aminomethyl-7-carbaguanosine(34) in tRNA + guanine. The protein operates within tRNA modification; tRNA-queuosine biosynthesis. Functionally, catalyzes the base-exchange of a guanine (G) residue with the queuine precursor 7-aminomethyl-7-deazaguanine (PreQ1) at position 34 (anticodon wobble position) in tRNAs with GU(N) anticodons (tRNA-Asp, -Asn, -His and -Tyr). Catalysis occurs through a double-displacement mechanism. The nucleophile active site attacks the C1' of nucleotide 34 to detach the guanine base from the RNA, forming a covalent enzyme-RNA intermediate. The proton acceptor active site deprotonates the incoming PreQ1, allowing a nucleophilic attack on the C1' of the ribose to form the product. After dissociation, two additional enzymatic reactions on the tRNA convert PreQ1 to queuine (Q), resulting in the hypermodified nucleoside queuosine (7-(((4,5-cis-dihydroxy-2-cyclopenten-1-yl)amino)methyl)-7-deazaguanosine). This Francisella tularensis subsp. holarctica (strain FTNF002-00 / FTA) protein is Queuine tRNA-ribosyltransferase.